A 496-amino-acid chain; its full sequence is Putative (R)-citramalate synthase CimA (496 aa).

Positions 3 to 253 (VRVLDTTLRD…DTSINIEMLY (251 aa)) constitute a Pyruvate carboxyltransferase domain.

The protein belongs to the alpha-IPM synthase/homocitrate synthase family. As to quaternary structure, homodimer.

The catalysed reaction is pyruvate + acetyl-CoA + H2O = (3R)-citramalate + CoA + H(+). It participates in amino-acid biosynthesis; L-isoleucine biosynthesis; 2-oxobutanoate from pyruvate: step 1/3. Functionally, catalyzes the condensation of pyruvate and acetyl-coenzyme A to form (R)-citramalate. The chain is Putative (R)-citramalate synthase CimA from Methanothermobacter thermautotrophicus (strain ATCC 29096 / DSM 1053 / JCM 10044 / NBRC 100330 / Delta H) (Methanobacterium thermoautotrophicum).